The sequence spans 508 residues: Photosystem II CP47 reaction center protein (508 aa).

6 helical membrane passes run 21-36, 101-115, 140-156, 203-218, 237-252, and 457-472; these read AVHL…WAGS, IVLS…IWHW, GIHL…FGAF, IAAG…FHLS, VLSS…AFVV, and TFAL…HGAR.

It belongs to the PsbB/PsbC family. PsbB subfamily. In terms of assembly, PSII is composed of 1 copy each of membrane proteins PsbA, PsbB, PsbC, PsbD, PsbE, PsbF, PsbH, PsbI, PsbJ, PsbK, PsbL, PsbM, PsbT, PsbX, PsbY, PsbZ, Psb30/Ycf12, at least 3 peripheral proteins of the oxygen-evolving complex and a large number of cofactors. It forms dimeric complexes. The cofactor is Binds multiple chlorophylls. PSII binds additional chlorophylls, carotenoids and specific lipids..

The protein localises to the plastid. The protein resides in the chloroplast thylakoid membrane. In terms of biological role, one of the components of the core complex of photosystem II (PSII). It binds chlorophyll and helps catalyze the primary light-induced photochemical processes of PSII. PSII is a light-driven water:plastoquinone oxidoreductase, using light energy to abstract electrons from H(2)O, generating O(2) and a proton gradient subsequently used for ATP formation. The protein is Photosystem II CP47 reaction center protein of Marchantia polymorpha (Common liverwort).